The following is a 440-amino-acid chain: Thymidine phosphorylase (440 aa).

It belongs to the thymidine/pyrimidine-nucleoside phosphorylase family. As to quaternary structure, homodimer.

It carries out the reaction thymidine + phosphate = 2-deoxy-alpha-D-ribose 1-phosphate + thymine. The protein operates within pyrimidine metabolism; dTMP biosynthesis via salvage pathway; dTMP from thymine: step 1/2. The enzymes which catalyze the reversible phosphorolysis of pyrimidine nucleosides are involved in the degradation of these compounds and in their utilization as carbon and energy sources, or in the rescue of pyrimidine bases for nucleotide synthesis. The chain is Thymidine phosphorylase from Salmonella heidelberg (strain SL476).